Reading from the N-terminus, the 318-residue chain is Methionyl-tRNA formyltransferase (318 aa).

114–117 (SVLP) contacts (6S)-5,6,7,8-tetrahydrofolate.

This sequence belongs to the Fmt family.

The enzyme catalyses L-methionyl-tRNA(fMet) + (6R)-10-formyltetrahydrofolate = N-formyl-L-methionyl-tRNA(fMet) + (6S)-5,6,7,8-tetrahydrofolate + H(+). In terms of biological role, attaches a formyl group to the free amino group of methionyl-tRNA(fMet). The formyl group appears to play a dual role in the initiator identity of N-formylmethionyl-tRNA by promoting its recognition by IF2 and preventing the misappropriation of this tRNA by the elongation apparatus. The sequence is that of Methionyl-tRNA formyltransferase from Bdellovibrio bacteriovorus (strain ATCC 15356 / DSM 50701 / NCIMB 9529 / HD100).